The chain runs to 530 residues: [Pyruvate dehydrogenase [acetyl-transferring]]-phosphatase 2, mitochondrial (530 aa).

Residues 1 to 67 (MSSTASYRIF…FALRKAYRHT (67 aa)) constitute a mitochondrion transit peptide. The 412-residue stretch at 107–518 (VLRFESNQLA…DDITVMVVFF (412 aa)) folds into the PPM-type phosphatase domain. Residues aspartate 142, glycine 143, aspartate 413, and aspartate 509 each contribute to the Mn(2+) site.

This sequence belongs to the PP2C family. Requires Mg(2+) as cofactor. In terms of tissue distribution, highly expressed in liver.

It localises to the mitochondrion. The enzyme catalyses O-phospho-L-seryl-[pyruvate dehydrogenase E1 alpha subunit] + H2O = L-seryl-[pyruvate dehydrogenase E1 alpha subunit] + phosphate. With respect to regulation, mg(2+)-dependent protein phosphatase. Phosphatase activity is increased in the presence of spermine, a naturally produced polyamine. Mitochondrial enzyme that catalyzes the dephosphorylation and concomitant reactivation of the alpha subunit of the E1 component of the pyruvate dehydrogenase complex (PDC), thereby stimulating the conversion of pyruvate into acetyl-CoA. Acts as a crucial regulator of T cell metabolism and function, with a particular focus on T-helper Th17. The chain is [Pyruvate dehydrogenase [acetyl-transferring]]-phosphatase 2, mitochondrial (Pdp2) from Rattus norvegicus (Rat).